The following is a 103-amino-acid chain: Large ribosomal subunit protein uL23c (103 aa).

It belongs to the universal ribosomal protein uL23 family. Part of the 50S ribosomal subunit.

It localises to the plastid. It is found in the chloroplast. In terms of biological role, binds to 23S rRNA. The polypeptide is Large ribosomal subunit protein uL23c (rpl23) (Gracilaria tenuistipitata var. liui (Red alga)).